The primary structure comprises 136 residues: Large ribosomal subunit protein uL16 (136 aa).

It belongs to the universal ribosomal protein uL16 family. In terms of assembly, part of the 50S ribosomal subunit.

In terms of biological role, binds 23S rRNA and is also seen to make contacts with the A and possibly P site tRNAs. The sequence is that of Large ribosomal subunit protein uL16 from Karelsulcia muelleri (strain GWSS) (Sulcia muelleri).